We begin with the raw amino-acid sequence, 623 residues long: Leucine aminopeptidase 2 (623 aa).

Residues 136-138 (QCQ) and 273-278 (PYGGME) each bind a peptide. His302 lines the Zn(2+) pocket. Catalysis depends on Glu303, which acts as the Proton acceptor. Zn(2+) is bound by residues His306 and Glu325. Tyr390 functions as the Proton donor in the catalytic mechanism.

The protein belongs to the peptidase M1 family. The cofactor is Zn(2+).

Its subcellular location is the cytoplasm. The protein localises to the nucleus. The catalysed reaction is an epoxide + H2O = an ethanediol. Its function is as follows. Aminopeptidase that preferentially cleaves di- and tripeptides. Also has low epoxide hydrolase activity (in vitro). Can hydrolyze the epoxide leukotriene LTA(4) but it forms preferentially 5,6-dihydroxy-7,9,11,14-eicosatetraenoic acid rather than the cytokine leukotriene B(4) as the product compared to the homologous mammalian enzyme (in vitro). In Phaeosphaeria nodorum (strain SN15 / ATCC MYA-4574 / FGSC 10173) (Glume blotch fungus), this protein is Leucine aminopeptidase 2.